Reading from the N-terminus, the 65-residue chain is Large ribosomal subunit protein bL35 (65 aa).

Residues Gly-20–Arg-42 form a disordered region.

Belongs to the bacterial ribosomal protein bL35 family.

The chain is Large ribosomal subunit protein bL35 from Syntrophus aciditrophicus (strain SB).